We begin with the raw amino-acid sequence, 163 residues long: Glyoxalase domain-containing protein 5 (163 aa).

Residues histidine 41–tyrosine 161 enclose the VOC domain.

The protein belongs to the glyoxalase I family.

The polypeptide is Glyoxalase domain-containing protein 5 (glod5) (Danio rerio (Zebrafish)).